Consider the following 182-residue polypeptide: Proline-rich protein, Y-linked (182 aa).

Disordered stretches follow at residues 1–22 and 89–108; these read MMRR…KPRD and VPAD…PPPG. Positions 91-108 are enriched in pro residues; sequence ADPPPASPYRTSPRPPPG. Positions 154–167 constitute a DUF1725 domain; that stretch reads WMKLETIILSKLSQ.

This Homo sapiens (Human) protein is Proline-rich protein, Y-linked (PRORY).